The following is a 357-amino-acid chain: Phenylalanine--tRNA ligase alpha subunit (357 aa).

Mg(2+) is bound at residue glutamate 259.

The protein belongs to the class-II aminoacyl-tRNA synthetase family. Phe-tRNA synthetase alpha subunit type 1 subfamily. Tetramer of two alpha and two beta subunits. Mg(2+) is required as a cofactor.

It is found in the cytoplasm. It catalyses the reaction tRNA(Phe) + L-phenylalanine + ATP = L-phenylalanyl-tRNA(Phe) + AMP + diphosphate + H(+). This chain is Phenylalanine--tRNA ligase alpha subunit, found in Jannaschia sp. (strain CCS1).